The following is a 272-amino-acid chain: Dermonecrotic toxin LvSicTox-alphaIC1bii (272 aa).

The active site involves His-5. Mg(2+) contacts are provided by Glu-25 and Asp-27. His-41 functions as the Nucleophile in the catalytic mechanism. Intrachain disulfides connect Cys-45–Cys-51 and Cys-47–Cys-189. Asp-84 contacts Mg(2+).

Belongs to the arthropod phospholipase D family. Class II subfamily. The cofactor is Mg(2+). In terms of tissue distribution, expressed by the venom gland.

It is found in the secreted. The enzyme catalyses an N-(acyl)-sphingosylphosphocholine = an N-(acyl)-sphingosyl-1,3-cyclic phosphate + choline. It carries out the reaction an N-(acyl)-sphingosylphosphoethanolamine = an N-(acyl)-sphingosyl-1,3-cyclic phosphate + ethanolamine. The catalysed reaction is a 1-acyl-sn-glycero-3-phosphocholine = a 1-acyl-sn-glycero-2,3-cyclic phosphate + choline. It catalyses the reaction a 1-acyl-sn-glycero-3-phosphoethanolamine = a 1-acyl-sn-glycero-2,3-cyclic phosphate + ethanolamine. In terms of biological role, dermonecrotic toxins cleave the phosphodiester linkage between the phosphate and headgroup of certain phospholipids (sphingolipid and lysolipid substrates), forming an alcohol (often choline) and a cyclic phosphate. This toxin acts on sphingomyelin (SM). It may also act on ceramide phosphoethanolamine (CPE), lysophosphatidylcholine (LPC) and lysophosphatidylethanolamine (LPE), but not on lysophosphatidylserine (LPS), and lysophosphatidylglycerol (LPG). It acts by transphosphatidylation, releasing exclusively cyclic phosphate products as second products. Induces dermonecrosis, hemolysis, increased vascular permeability, edema, inflammatory response, and platelet aggregation. The sequence is that of Dermonecrotic toxin LvSicTox-alphaIC1bii from Loxosceles variegata (Recluse spider).